A 105-amino-acid chain; its full sequence is N(4)-acetylcytidine amidohydrolase (105 aa).

In terms of domain architecture, ASCH spans 8 to 93; it reads TFFEFLTPLV…ALIQEIYPNI (86 aa). The Proton acceptor role is filled by lysine 22. Catalysis depends on threonine 25, which acts as the Nucleophile. The Proton donor role is filled by glutamate 75.

This sequence belongs to the N(4)-acetylcytidine amidohydrolase family.

It catalyses the reaction N(4)-acetylcytidine + H2O = cytidine + acetate + H(+). The enzyme catalyses N(4)-acetyl-2'-deoxycytidine + H2O = 2'-deoxycytidine + acetate + H(+). It carries out the reaction N(4)-acetylcytosine + H2O = cytosine + acetate + H(+). Its function is as follows. Catalyzes the hydrolysis of N(4)-acetylcytidine (ac4C). This Vibrio cholerae serotype O1 (strain ATCC 39315 / El Tor Inaba N16961) protein is N(4)-acetylcytidine amidohydrolase.